The following is a 293-amino-acid chain: Bifunctional protein FolD (293 aa).

NADP(+)-binding positions include 165–167, S190, and I231; that span reads GRS.

It belongs to the tetrahydrofolate dehydrogenase/cyclohydrolase family. As to quaternary structure, homodimer.

The catalysed reaction is (6R)-5,10-methylene-5,6,7,8-tetrahydrofolate + NADP(+) = (6R)-5,10-methenyltetrahydrofolate + NADPH. It catalyses the reaction (6R)-5,10-methenyltetrahydrofolate + H2O = (6R)-10-formyltetrahydrofolate + H(+). The protein operates within one-carbon metabolism; tetrahydrofolate interconversion. Catalyzes the oxidation of 5,10-methylenetetrahydrofolate to 5,10-methenyltetrahydrofolate and then the hydrolysis of 5,10-methenyltetrahydrofolate to 10-formyltetrahydrofolate. This is Bifunctional protein FolD from Parasynechococcus marenigrum (strain WH8102).